Reading from the N-terminus, the 93-residue chain is Alpha-defensin 15 (93 aa).

A signal peptide spans 1–19 (MKTLVLLSALVLLAFQVQA). Residues 20–58 (DPIQNTDEETKTEEQPGEDDQAVSVSFGDPEGSSLQEES) constitute a propeptide that is removed on maturation. Positions 23 to 56 (QNTDEETKTEEQPGEDDQAVSVSFGDPEGSSLQE) are disordered. Disulfide bonds link C64–C92, C66–C81, and C71–C91.

Belongs to the alpha-defensin family. Paneth cells of the small bowel.

It is found in the secreted. Its function is as follows. Probably contributes to the antimicrobial barrier function of the small bowel mucosa. This is Alpha-defensin 15 (Defa15) from Mus musculus (Mouse).